Here is a 572-residue protein sequence, read N- to C-terminus: Acetyl-coenzyme A synthetase (572 aa).

T260 provides a ligand contact to CoA. Residues 333–335, 354–359, D440, and R455 each bind ATP; these read GEP and DTWWMT. Residue S463 coordinates CoA. R466 serves as a coordination point for ATP. Positions 477, 479, and 482 each coordinate Mg(2+). K524 contacts CoA. An N6-acetyllysine modification is found at K549.

The protein belongs to the ATP-dependent AMP-binding enzyme family. As to quaternary structure, interacts with FloT. Mg(2+) is required as a cofactor. Post-translationally, acetylated. Deacetylation by the SIR2-homolog deacetylase activates the enzyme.

It localises to the cell membrane. The protein localises to the membrane raft. It carries out the reaction acetate + ATP + CoA = acetyl-CoA + AMP + diphosphate. In terms of biological role, catalyzes the conversion of acetate into acetyl-CoA (AcCoA), an essential intermediate at the junction of anabolic and catabolic pathways. AcsA undergoes a two-step reaction. In the first half reaction, AcsA combines acetate with ATP to form acetyl-adenylate (AcAMP) intermediate. In the second half reaction, it can then transfer the acetyl group from AcAMP to the sulfhydryl group of CoA, forming the product AcCoA. Has a role in growth and sporulation on acetate. This Bacillus subtilis (strain 168) protein is Acetyl-coenzyme A synthetase (acsA).